The following is a 257-amino-acid chain: Alkaline phosphatase synthesis transcriptional regulatory protein SphR (257 aa).

The Response regulatory domain occupies 25–148 (RILVVEDEAV…ELVARCRALL (124 aa)). At D83 the chain carries 4-aspartylphosphate. The segment at residues 159–257 (PAVLRYEGLK…TVRGFGYRLG (99 aa)) is a DNA-binding region (ompR/PhoB-type).

Post-translationally, phosphorylated by SphS.

Member of the two-component regulatory system SphR/SphS. Response regulator. Involved in inducible production of alkaline phosphatase in response to phosphate limitation as it is directly involved in the regulation of phoA transcription in response to phosphate limitation. Binds to two distinct sites upstream from the phoA promoter. The chain is Alkaline phosphatase synthesis transcriptional regulatory protein SphR (sphR) from Synechococcus elongatus (strain ATCC 33912 / PCC 7942 / FACHB-805) (Anacystis nidulans R2).